The chain runs to 90 residues: uncharacterized protein (90 aa).

Positions 1–20 are cleaved as a signal peptide; the sequence is MAYKMLQVVLCSTLLIGALG.

This is an uncharacterized protein from Homo sapiens (Human).